Consider the following 314-residue polypeptide: DNA-directed RNA polymerase subunit alpha (314 aa).

The segment at 1-228 (MAQFQIECVE…NLFIPLKDLN (228 aa)) is alpha N-terminal domain (alpha-NTD). Residues 243–314 (PESQIPIEEL…ITLPHEKAKA (72 aa)) are alpha C-terminal domain (alpha-CTD).

The protein belongs to the RNA polymerase alpha chain family. In terms of assembly, homodimer. In cyanobacteria the RNAP catalytic core is composed of 2 alpha, 1 beta, 1 beta', 1 gamma and 1 omega subunit. When a sigma factor is associated with the core the holoenzyme is formed, which can initiate transcription.

The enzyme catalyses RNA(n) + a ribonucleoside 5'-triphosphate = RNA(n+1) + diphosphate. In terms of biological role, DNA-dependent RNA polymerase catalyzes the transcription of DNA into RNA using the four ribonucleoside triphosphates as substrates. In Synechocystis sp. (strain ATCC 27184 / PCC 6803 / Kazusa), this protein is DNA-directed RNA polymerase subunit alpha.